The chain runs to 2280 residues: Protein Ycf2 (2280 aa).

1631-1638 (GSIGTGRS) is a binding site for ATP.

It belongs to the Ycf2 family.

The protein resides in the plastid. It localises to the chloroplast stroma. Its function is as follows. Probable ATPase of unknown function. Its presence in a non-photosynthetic plant (Epifagus virginiana) and experiments in tobacco indicate that it has an essential function which is probably not related to photosynthesis. The polypeptide is Protein Ycf2 (ycf2-A) (Nicotiana tabacum (Common tobacco)).